The chain runs to 278 residues: MKTTKDFWVMKNEGKKIVMITAYDYPSAKQAEQAGADIILVGDSLGNVVLGYDSTVYVTMEDMIHHGKAAKRGAPNTFIVADMPFMSCHLSIRDTLLNGARLIQETGAQAVKVEGADEMIPHIKALVRAGIPVVSHLGLTPQTAAVLGGFKVQGKDGEAARKMLEDVKECQEAGAFALVLECIPKQLAQEISTTLTIPTIGIGAGVHTDGQVLVYHDILTYGVNRAPKFVKAYANADQLMLKGLQDYADEVRSMNFPDDEHSFTMKEEELKTLYGGRG.

Mg(2+)-binding residues include D43 and D82. Residues 43–44 (DS), D82, and K112 contribute to the 3-methyl-2-oxobutanoate site. E114 is a binding site for Mg(2+). Catalysis depends on E181, which acts as the Proton acceptor.

Belongs to the PanB family. As to quaternary structure, homodecamer; pentamer of dimers. It depends on Mg(2+) as a cofactor.

The protein resides in the cytoplasm. The enzyme catalyses 3-methyl-2-oxobutanoate + (6R)-5,10-methylene-5,6,7,8-tetrahydrofolate + H2O = 2-dehydropantoate + (6S)-5,6,7,8-tetrahydrofolate. Its pathway is cofactor biosynthesis; (R)-pantothenate biosynthesis; (R)-pantoate from 3-methyl-2-oxobutanoate: step 1/2. Catalyzes the reversible reaction in which hydroxymethyl group from 5,10-methylenetetrahydrofolate is transferred onto alpha-ketoisovalerate to form ketopantoate. This Desulfitobacterium hafniense (strain DSM 10664 / DCB-2) protein is 3-methyl-2-oxobutanoate hydroxymethyltransferase.